A 158-amino-acid chain; its full sequence is MAIFEGSFTNASTLKVGIVIARFNDLITNKILSGCLDCLKRHGLDTSELSNQVDIVWVPGSFELPIAAKTLMKKKSYDVVIALGAVIRGETSHYDVVISEASKGISQVSNENNIPIIFGVLTTDTMQQALERAGIKNNLGWNYALQAIEMGSLIKNLN.

Residues Phe-23, 61–63 (SFE), and 85–87 (AVI) each bind 5-amino-6-(D-ribitylamino)uracil. (2S)-2-hydroxy-3-oxobutyl phosphate is bound at residue 90–91 (ET). His-93 functions as the Proton donor in the catalytic mechanism. Phe-118 lines the 5-amino-6-(D-ribitylamino)uracil pocket. Residue Arg-132 participates in (2S)-2-hydroxy-3-oxobutyl phosphate binding.

Belongs to the DMRL synthase family.

The enzyme catalyses (2S)-2-hydroxy-3-oxobutyl phosphate + 5-amino-6-(D-ribitylamino)uracil = 6,7-dimethyl-8-(1-D-ribityl)lumazine + phosphate + 2 H2O + H(+). The protein operates within cofactor biosynthesis; riboflavin biosynthesis; riboflavin from 2-hydroxy-3-oxobutyl phosphate and 5-amino-6-(D-ribitylamino)uracil: step 1/2. Functionally, catalyzes the formation of 6,7-dimethyl-8-ribityllumazine by condensation of 5-amino-6-(D-ribitylamino)uracil with 3,4-dihydroxy-2-butanone 4-phosphate. This is the penultimate step in the biosynthesis of riboflavin. This chain is 6,7-dimethyl-8-ribityllumazine synthase, found in Prochlorococcus marinus (strain MIT 9301).